Reading from the N-terminus, the 44-residue chain is Putative keratin-associated protein 20-4 (44 aa).

This sequence belongs to the KRTAP type 20 family. In terms of assembly, interacts with hair keratins.

In terms of biological role, in the hair cortex, hair keratin intermediate filaments are embedded in an interfilamentous matrix, consisting of hair keratin-associated proteins (KRTAP), which are essential for the formation of a rigid and resistant hair shaft through their extensive disulfide bond cross-linking with abundant cysteine residues of hair keratins. The matrix proteins include the high-sulfur and high-glycine-tyrosine keratins. In Homo sapiens (Human), this protein is Putative keratin-associated protein 20-4 (KRTAP20-4).